We begin with the raw amino-acid sequence, 803 residues long: Mechanosensitive cation channel TMEM63A (803 aa).

Residues 1–51 lie on the Extracellular side of the membrane; the sequence is MTDSPFLELWQSRTVAIRERLGIGDQPNDSYCYNSAKNSTVLQGVTFGGIP. The helical transmembrane segment at 52 to 74 threads the bilayer; sequence TVLFIDVSCFLFLIVVFSIIRRK. The Cytoplasmic portion of the chain corresponds to 75–133; the sequence is FWDYGRIALVSEGNSESRFRRLSSSSSGQQDFESELGCCSWLTAIFRLHDDQILEWCGE. Residues 134–166 traverse the membrane as a helical segment; it reads DAIHYLSFQRHIIFLLVVVSCLSLCIILPVNLS. The Extracellular segment spans residues 167–190; that stretch reads GDLLDKDPYSFGRTTIANLQTDNN. The chain crosses the membrane as a helical span at residues 191–216; the sequence is LLWLHTIFAILYLILTVVFMRHHTQS. The Cytoplasmic segment spans residues 217-415; it reads IKYKEESLVR…CWKNLSIQGF (199 aa). The interval 218 to 413 is intracellular linker IL2; confers mechanosensitivity; that stretch reads KYKEESLVRR…DICWKNLSIQ (196 aa). The helical transmembrane segment at 416–443 threads the bilayer; the sequence is RWWFQWLGINFILFVGLFFLTTPSIILS. The Extracellular segment spans residues 444-461; the sequence is TMDKFNVTKPIHALNDPI. A helical transmembrane segment spans residues 462–489; sequence ISQFFPTLLLWSFSALLPTIVCYSTLLE. Over 490-494 the chain is Cytoplasmic; that stretch reads SHWTK. A helical membrane pass occupies residues 495 to 531; that stretch reads SGENRIMMTKVYIFLIFMVLILPSLGLTSLDFFFRWL. Topologically, residues 532 to 553 are extracellular; that stretch reads FDKTSSEASIRLECVFLPDQGA. The chain crosses the membrane as a helical span at residues 554-585; that stretch reads FFVNYVIASAFIGNGMELLRLPGLILYTFRMV. The segment at 554–585 is gating helix; sequence FFVNYVIASAFIGNGMELLRLPGLILYTFRMV. Residues 586 to 605 lie on the Cytoplasmic side of the membrane; the sequence is MAKTAADRRNVKQHQAFEYE. A helical transmembrane segment spans residues 606–623; sequence FGAMYAWMLCVFTVIMAY. At 624 to 627 the chain is on the extracellular side; it reads SITC. A helical transmembrane segment spans residues 628–650; sequence PIIVPFGLIYILLKHMVDRHNLY. Topologically, residues 651 to 660 are cytoplasmic; the sequence is FAYLPAKLEK. Residues 661-688 traverse the membrane as a helical segment; sequence RIHFAAVNQALAAPILCLFWLYFFSFLR. Topologically, residues 689 to 693 are extracellular; it reads LGLKA. The chain crosses the membrane as a helical span at residues 694-708; it reads PLTLFTFLVLLLTIL. Residues 709–803 are Cytoplasmic-facing; the sequence is VCLAYTCFGC…DSVAAADQED (95 aa).

It belongs to the CSC1 (TC 1.A.17) family. In terms of assembly, (Microbial infection) Interacts with H.contortus GAL-1 (via domain galectin 1).

It localises to the lysosome membrane. Its subcellular location is the early endosome membrane. It is found in the cell membrane. The catalysed reaction is Ca(2+)(in) = Ca(2+)(out). Mechanosensitive cation channel with low conductance and high activation threshold. In contrast to TMEM63B, does not show phospholipid scramblase activity. Acts as a regulator of lysosomal morphology by mediating lysosomal mechanosensitivity. Important for the baby's first breath and respiration throughout life. Upon lung inflation conducts cation currents in alveolar type 1 and 2 cells triggering lamellar body exocytosis and surfactant secretion into airspace. Also acts as an osmosensitive cation channel preferentially activated by hypotonic stress. Its function is as follows. (Microbial infection) Involved in the immunomodulatory effects exerted by H.contortus GAL-1 on host peripheral blood mononuclear cells to down-regulate host immune response. This chain is Mechanosensitive cation channel TMEM63A (TMEM63A), found in Capra hircus (Goat).